Consider the following 291-residue polypeptide: uncharacterized protein (291 aa).

10 helical membrane-spanning segments follow: residues 1–21 (MHNL…LKIA), 26–46 (IIIE…SYFL), 67–87 (PIFL…SKAV), 95–115 (SDAA…LIFH), 117–137 (TLSQ…FCLL), 149–169 (FKGV…DILF), 179–199 (FPAT…IYLF), 208–228 (SSVI…LFYI), 241–261 (VFAG…ALVF), and 270–290 (WLGI…DKII). The EamA domain occupies 107-138 (ILAAFLIFHETLSQSKIIGVVLAFIGLFCLLT).

It localises to the cell membrane. This is an uncharacterized protein from Haemophilus influenzae (strain ATCC 51907 / DSM 11121 / KW20 / Rd).